The primary structure comprises 208 residues: 3-isopropylmalate dehydratase small subunit 2 (208 aa).

It belongs to the LeuD family. LeuD type 1 subfamily. In terms of assembly, heterodimer of LeuC and LeuD.

The catalysed reaction is (2R,3S)-3-isopropylmalate = (2S)-2-isopropylmalate. Its pathway is amino-acid biosynthesis; L-leucine biosynthesis; L-leucine from 3-methyl-2-oxobutanoate: step 2/4. Its function is as follows. Catalyzes the isomerization between 2-isopropylmalate and 3-isopropylmalate, via the formation of 2-isopropylmaleate. This Salmonella choleraesuis (strain SC-B67) protein is 3-isopropylmalate dehydratase small subunit 2.